We begin with the raw amino-acid sequence, 995 residues long: Pheromone-regulated membrane protein 10 (995 aa).

Disordered regions lie at residues methionine 1–histidine 217, glycine 253–methionine 299, aspartate 326–proline 407, and asparagine 425–glutamine 508. Positions serine 74 to serine 88 are enriched in low complexity. Residues valine 110 to serine 121 are compositionally biased toward basic and acidic residues. Residues serine 157 to serine 166 are compositionally biased toward low complexity. Positions lysine 170–aspartate 187 are enriched in basic and acidic residues. The span at glycine 259–isoleucine 269 shows a compositional bias: gly residues. The span at glutamate 283–alanine 296 shows a compositional bias: acidic residues. Positions aspartate 326–proline 347 are enriched in polar residues. Basic and acidic residues-rich tracts occupy residues aspartate 359 to lysine 371 and glycine 385 to leucine 396. Residues glutamate 495–proline 506 are compositionally biased toward acidic residues. 10 helical membrane passes run valine 678–leucine 698, isoleucine 700–methionine 720, serine 726–isoleucine 746, phenylalanine 752–leucine 772, isoleucine 794–valine 814, lysine 833–asparagine 850, proline 858–phenylalanine 878, valine 881–serine 901, glycine 906–serine 926, and valine 965–phenylalanine 985.

Belongs to the ThrE exporter (TC 2.A.79) family.

Its subcellular location is the membrane. The polypeptide is Pheromone-regulated membrane protein 10 (Pichia sorbitophila (strain ATCC MYA-4447 / BCRC 22081 / CBS 7064 / NBRC 10061 / NRRL Y-12695) (Hybrid yeast)).